Here is a 476-residue protein sequence, read N- to C-terminus: Methylenetetrahydrofolate--tRNA-(uracil-5-)-methyltransferase TrmFO (476 aa).

14–19 (GGGLAG) contacts FAD. The interval 428 to 447 (LTEPPTHGADGKKLRGPEKS) is disordered. Over residues 436–447 (ADGKKLRGPEKS) the composition is skewed to basic and acidic residues.

The protein belongs to the MnmG family. TrmFO subfamily. FAD serves as cofactor.

The protein localises to the cytoplasm. The catalysed reaction is uridine(54) in tRNA + (6R)-5,10-methylene-5,6,7,8-tetrahydrofolate + NADH + H(+) = 5-methyluridine(54) in tRNA + (6S)-5,6,7,8-tetrahydrofolate + NAD(+). It carries out the reaction uridine(54) in tRNA + (6R)-5,10-methylene-5,6,7,8-tetrahydrofolate + NADPH + H(+) = 5-methyluridine(54) in tRNA + (6S)-5,6,7,8-tetrahydrofolate + NADP(+). Catalyzes the folate-dependent formation of 5-methyl-uridine at position 54 (M-5-U54) in all tRNAs. The chain is Methylenetetrahydrofolate--tRNA-(uracil-5-)-methyltransferase TrmFO from Rhodopseudomonas palustris (strain BisA53).